We begin with the raw amino-acid sequence, 597 residues long: Elongation factor 4 (597 aa).

In terms of domain architecture, tr-type G spans 2 to 184 (NNIRNFSIIA…SLITKVPPPK (183 aa)). Residues 14–19 (DHGKST) and 131–134 (NKID) contribute to the GTP site.

Belongs to the TRAFAC class translation factor GTPase superfamily. Classic translation factor GTPase family. LepA subfamily.

The protein localises to the cell inner membrane. The catalysed reaction is GTP + H2O = GDP + phosphate + H(+). Functionally, required for accurate and efficient protein synthesis under certain stress conditions. May act as a fidelity factor of the translation reaction, by catalyzing a one-codon backward translocation of tRNAs on improperly translocated ribosomes. Back-translocation proceeds from a post-translocation (POST) complex to a pre-translocation (PRE) complex, thus giving elongation factor G a second chance to translocate the tRNAs correctly. Binds to ribosomes in a GTP-dependent manner. The protein is Elongation factor 4 of Janthinobacterium sp. (strain Marseille) (Minibacterium massiliensis).